A 120-amino-acid chain; its full sequence is Glycine cleavage system H protein (120 aa).

The Lipoyl-binding domain maps to 17–99 (VATVGITNYA…QGAGWFFKLK (83 aa)). N6-lipoyllysine is present on K58.

It belongs to the GcvH family. The glycine cleavage system is composed of four proteins: P, T, L and H. Requires (R)-lipoate as cofactor.

The glycine cleavage system catalyzes the degradation of glycine. The H protein shuttles the methylamine group of glycine from the P protein to the T protein. The polypeptide is Glycine cleavage system H protein (Rhizobium leguminosarum bv. trifolii (strain WSM2304)).